Here is a 338-residue protein sequence, read N- to C-terminus: 4-hydroxy-3-methylbut-2-enyl diphosphate reductase (338 aa).

C21 provides a ligand contact to [4Fe-4S] cluster. 2 residues coordinate (2E)-4-hydroxy-3-methylbut-2-enyl diphosphate: H50 and H83. Dimethylallyl diphosphate contacts are provided by H50 and H83. Isopentenyl diphosphate contacts are provided by H50 and H83. C105 contributes to the [4Fe-4S] cluster binding site. H133 contributes to the (2E)-4-hydroxy-3-methylbut-2-enyl diphosphate binding site. Residue H133 participates in dimethylallyl diphosphate binding. H133 serves as a coordination point for isopentenyl diphosphate. E135 acts as the Proton donor in catalysis. T173 lines the (2E)-4-hydroxy-3-methylbut-2-enyl diphosphate pocket. [4Fe-4S] cluster is bound at residue C203. 4 residues coordinate (2E)-4-hydroxy-3-methylbut-2-enyl diphosphate: S231, S232, N233, and S276. Residues S231, S232, N233, and S276 each coordinate dimethylallyl diphosphate. Residues S231, S232, N233, and S276 each coordinate isopentenyl diphosphate.

It belongs to the IspH family. The cofactor is [4Fe-4S] cluster.

It carries out the reaction isopentenyl diphosphate + 2 oxidized [2Fe-2S]-[ferredoxin] + H2O = (2E)-4-hydroxy-3-methylbut-2-enyl diphosphate + 2 reduced [2Fe-2S]-[ferredoxin] + 2 H(+). It catalyses the reaction dimethylallyl diphosphate + 2 oxidized [2Fe-2S]-[ferredoxin] + H2O = (2E)-4-hydroxy-3-methylbut-2-enyl diphosphate + 2 reduced [2Fe-2S]-[ferredoxin] + 2 H(+). It participates in isoprenoid biosynthesis; dimethylallyl diphosphate biosynthesis; dimethylallyl diphosphate from (2E)-4-hydroxy-3-methylbutenyl diphosphate: step 1/1. It functions in the pathway isoprenoid biosynthesis; isopentenyl diphosphate biosynthesis via DXP pathway; isopentenyl diphosphate from 1-deoxy-D-xylulose 5-phosphate: step 6/6. Its function is as follows. Catalyzes the conversion of 1-hydroxy-2-methyl-2-(E)-butenyl 4-diphosphate (HMBPP) into a mixture of isopentenyl diphosphate (IPP) and dimethylallyl diphosphate (DMAPP). Acts in the terminal step of the DOXP/MEP pathway for isoprenoid precursor biosynthesis. This Streptomyces coelicolor (strain ATCC BAA-471 / A3(2) / M145) protein is 4-hydroxy-3-methylbut-2-enyl diphosphate reductase.